A 784-amino-acid polypeptide reads, in one-letter code: Toll-like receptor 2 (784 aa).

The signal sequence occupies residues 1 to 20; sequence MPRALWTAWVWAVIILSMEG. Residues 21-587 are Extracellular-facing; sequence ASHQASSLSC…ARLSLSECHR (567 aa). Cys-30 and Cys-36 are disulfide-bonded. LRR repeat units lie at residues 54–77, 78–101, 102–125, 126–150, 151–175, 176–199, 200–223, 224–250, 251–278, 279–308, 309–337, 338–361, 362–388, 389–414, 415–437, 438–457, 458–478, 479–500, and 501–524; these read VKSLDLSNNEITYVSNRDLQRCVN, LKTLRLGANEIHTVEEDSFFHLRN, LEYLDLSYNRLSNLSSSWFRSLYA, LKFLNLLGNVYKTLGETSLFSHLPN, LRTLKVGNSNSFTEIHEKDFTGLIF, LEELEISAQNLQIYVPKSLKSIQN, ISHLILHLKQPVLLVDILVDIVSS, LDCLELRDTNLHTFHFSEASISEMNTS, VKKLIFRNVQFTDESFVEVVKLFNYVSG, ILEVEFDDCTHDGIGDFRALSLDRIRHLGN, VETLTIRKLHIPQFFLFHDLSSIYPLTGK, VKRVTIESSKVFLVPCLLSQHLKS, LEYLDLSENLMSEETLKNSACKDAWPF, LQTLVLRQNRLKSLEKTGELLLTLKN, LNNLDISKNNFLSMPETCQWPGK, MKQLNLSSTRIHSLTQCLPQ, TLEILDVSNNNLDSFSLILPQ, LKELYISRNKLKTLPDASFLPV, and LSVMRISGNIINTFSKEQLDSFPQ. A glycan (N-linked (GlcNAc...) asparagine) is linked at Asn-114. Asn-199 carries an N-linked (GlcNAc...) asparagine glycan. N-linked (GlcNAc...) asparagine glycosylation occurs at Asn-248. Cys-353 and Cys-382 are oxidised to a cystine. Cysteines 432 and 454 form a disulfide. Residue Asn-442 is glycosylated (N-linked (GlcNAc...) asparagine). Residues 525–579 enclose the LRRCT domain; sequence LKALEAGGNNFICSCDFLSFTQGQQALARVLVDWPDGYRCDAPSHVRGQRVQDAR. Residues 588 to 608 form a helical membrane-spanning segment; sequence AAVVSAVCCALFLLLLLTGVL. The Cytoplasmic portion of the chain corresponds to 609-784; sequence CHRFHGLWYM…WLNLRAAIRS (176 aa). Positions 639–782 constitute a TIR domain; the sequence is LCYDAFVSYS…AFWLNLRAAI (144 aa). A Glycyl lysine isopeptide (Lys-Gly) (interchain with G-Cter in ubiquitin) cross-link involves residue Lys-754. The short motif at 761–778 is the ATG16L1-binding motif element; that stretch reads YLEWPTDETQQEAFWLNL.

Belongs to the Toll-like receptor family. Interacts with LY96, TLR1 and TLR6 (via extracellular domain). TLR2 seems to exist in heterodimers with either TLR1 or TLR6 before stimulation by the ligand. The heterodimers form bigger oligomers in response to their corresponding ligands as well as further heterotypic associations with other receptors such as CD14 and/or CD36. Binds MYD88 (via TIR domain). Interacts with TICAM1. Interacts with CNPY3. Interacts with ATG16L1. Interacts with PPP1R11. Interacts with TICAM2. Interacts with TIRAP. Post-translationally, ubiquitinated at Lys-754 by PPP1R11, leading to its degradation. Deubiquitinated by USP2. In terms of processing, glycosylation of Asn-442 is critical for secretion of the N-terminal ectodomain of TLR2.

It localises to the membrane. Its subcellular location is the cytoplasmic vesicle. The protein localises to the phagosome membrane. It is found in the membrane raft. Cooperates with LY96 to mediate the innate immune response to bacterial lipoproteins and other microbial cell wall components. Cooperates with TLR1 or TLR6 to mediate the innate immune response to bacterial lipoproteins or lipopeptides. Acts via MYD88 and TRAF6, leading to NF-kappa-B activation, cytokine secretion and the inflammatory response. May also promote apoptosis in response to lipoproteins. Forms activation clusters composed of several receptors depending on the ligand, these clusters trigger signaling from the cell surface and subsequently are targeted to the Golgi in a lipid-raft dependent pathway. Forms the cluster TLR2:TLR6:CD14:CD36 in response to diacylated lipopeptides and TLR2:TLR1:CD14 in response to triacylated lipopeptides. This chain is Toll-like receptor 2 (TLR2), found in Capra hircus (Goat).